We begin with the raw amino-acid sequence, 153 residues long: Movement protein (153 aa).

2 disordered regions span residues 1-24 and 107-153; these read MAQE…EQDP and ALSL…RNQR. Polar residues-rich tracts occupy residues 109-122 and 140-153; these read SLLS…NQPW and GQRQ…RNQR.

The protein belongs to the luteoviruses movement protein family.

It localises to the host nucleus envelope. Its function is as follows. Transports viral genome to neighboring plant cells directly through plasmosdesmata, without any budding. The movement protein allows efficient cell to cell propagation, by bypassing the host cell wall barrier. Acts as a suppressor of RNA-mediated gene silencing, also known as post-transcriptional gene silencing (PTGS), a mechanism of plant viral defense that limits the accumulation of viral RNAs. The sequence is that of Movement protein from Avena byzantina (Oat).